Reading from the N-terminus, the 39-residue chain is Natriuretic peptide CnNP-a (39 aa).

The propeptide occupies 1 to 8 (SGSKTAKI). Cysteines 12 and 28 form a disulfide.

It belongs to the natriuretic peptide family. As to expression, expressed by the venom gland.

Its subcellular location is the secreted. In terms of biological role, snake venom natriuretic peptide that targets both NPR1 and NPR2. Exhibits hypotensive and vasodepressor activities. This chain is Natriuretic peptide CnNP-a, found in Cryptophis nigrescens (Eastern small-eyed snake).